The sequence spans 321 residues: 37 kDa cell surface protein (321 aa).

The protein resides in the secreted. Its subcellular location is the cell wall. This Candida albicans (Yeast) protein is 37 kDa cell surface protein (CSP37).